Here is a 287-residue protein sequence, read N- to C-terminus: Probable prolyl 4-hydroxylase 3 (287 aa).

Residues 1–16 (MAKLRHSRFQARKWST) lie on the Cytoplasmic side of the membrane. Residues 17–37 (LMLVLFMLFMLTIVLLMLLAF) form a helical; Signal-anchor for type II membrane protein membrane-spanning segment. The Lumenal segment spans residues 38–287 (GVFSLPINND…KWMHVGEYKI (250 aa)). The region spanning 159–282 (HGEGLQVLHY…KWSSTKWMHV (124 aa)) is the Fe2OG dioxygenase domain. Fe cation is bound by residues histidine 177 and aspartate 179. Asparagine 218 carries N-linked (GlcNAc...) asparagine glycosylation. Histidine 263 serves as a coordination point for Fe cation. Lysine 273 serves as a coordination point for 2-oxoglutarate.

It belongs to the P4HA family. It depends on Fe(2+) as a cofactor. The cofactor is L-ascorbate.

The protein resides in the endoplasmic reticulum membrane. The catalysed reaction is L-prolyl-[collagen] + 2-oxoglutarate + O2 = trans-4-hydroxy-L-prolyl-[collagen] + succinate + CO2. Catalyzes the post-translational formation of 4-hydroxyproline in -Xaa-Pro-Gly- sequences in proline-rich peptide sequences of plant glycoproteins and other proteins. Hydroxyprolines are important constituent of many plant cell wall glycoproteins such as extensins, hydroxyproline-rich glycoproteins, lectins and arabinogalactan proteins. This is Probable prolyl 4-hydroxylase 3 from Arabidopsis thaliana (Mouse-ear cress).